Here is a 103-residue protein sequence, read N- to C-terminus: Large ribosomal subunit protein bL21 (103 aa).

The protein belongs to the bacterial ribosomal protein bL21 family. As to quaternary structure, part of the 50S ribosomal subunit. Contacts protein L20.

Its function is as follows. This protein binds to 23S rRNA in the presence of protein L20. This Teredinibacter turnerae (strain ATCC 39867 / T7901) protein is Large ribosomal subunit protein bL21.